The sequence spans 199 residues: MRVGVLAVQGAFIEHEKILQNLGVECLELRNGKDARQDVEGLILPGGESTTQGKLLRELDMFEPLREKIVAGLPVLATCAGLILLAEELANDSARYFATLPVRVKRNAYGRQLGSFYTEEQFGDLGKVPMTFIRAPYIESVGEDVEILAKVNGDIVGVRYKNQIGLSFHPELNGDRRIHQMFLDSISGGKSFPCTQKAV.

G47–S49 lines the L-glutamine pocket. C79 (nucleophile) is an active-site residue. Residues R106 and I133–R134 contribute to the L-glutamine site. Active-site charge relay system residues include H169 and E171.

It belongs to the glutaminase PdxT/SNO family. In the presence of PdxS, forms a dodecamer of heterodimers. Only shows activity in the heterodimer.

It catalyses the reaction aldehydo-D-ribose 5-phosphate + D-glyceraldehyde 3-phosphate + L-glutamine = pyridoxal 5'-phosphate + L-glutamate + phosphate + 3 H2O + H(+). It carries out the reaction L-glutamine + H2O = L-glutamate + NH4(+). Its pathway is cofactor biosynthesis; pyridoxal 5'-phosphate biosynthesis. Its function is as follows. Catalyzes the hydrolysis of glutamine to glutamate and ammonia as part of the biosynthesis of pyridoxal 5'-phosphate. The resulting ammonia molecule is channeled to the active site of PdxS. This chain is Pyridoxal 5'-phosphate synthase subunit PdxT, found in Desulfitobacterium hafniense (strain DSM 10664 / DCB-2).